Here is a 248-residue protein sequence, read N- to C-terminus: Pyridoxine 5'-phosphate synthase (248 aa).

Asn12 contributes to the 3-amino-2-oxopropyl phosphate binding site. Residue 14 to 15 participates in 1-deoxy-D-xylulose 5-phosphate binding; the sequence is DH. Arg23 is a 3-amino-2-oxopropyl phosphate binding site. His48 functions as the Proton acceptor in the catalytic mechanism. 2 residues coordinate 1-deoxy-D-xylulose 5-phosphate: Arg50 and His55. Residue Glu75 is the Proton acceptor of the active site. Thr105 contributes to the 1-deoxy-D-xylulose 5-phosphate binding site. His196 functions as the Proton donor in the catalytic mechanism. 3-amino-2-oxopropyl phosphate-binding positions include Gly197 and 218 to 219; that span reads GH.

The protein belongs to the PNP synthase family. In terms of assembly, homooctamer; tetramer of dimers.

It localises to the cytoplasm. The enzyme catalyses 3-amino-2-oxopropyl phosphate + 1-deoxy-D-xylulose 5-phosphate = pyridoxine 5'-phosphate + phosphate + 2 H2O + H(+). The protein operates within cofactor biosynthesis; pyridoxine 5'-phosphate biosynthesis; pyridoxine 5'-phosphate from D-erythrose 4-phosphate: step 5/5. Its function is as follows. Catalyzes the complicated ring closure reaction between the two acyclic compounds 1-deoxy-D-xylulose-5-phosphate (DXP) and 3-amino-2-oxopropyl phosphate (1-amino-acetone-3-phosphate or AAP) to form pyridoxine 5'-phosphate (PNP) and inorganic phosphate. The polypeptide is Pyridoxine 5'-phosphate synthase (Pseudomonas aeruginosa (strain UCBPP-PA14)).